A 288-amino-acid polypeptide reads, in one-letter code: Disulfide-bond oxidoreductase YghU (288 aa).

Glutathione-binding positions include Asn-26, 52–54 (TPN), Gln-87, Ile-101, 117–118 (ES), Gln-151, and Arg-178. The GST N-terminal domain maps to 46-133 (QLYSLGTPNG…YLAEKFGYFL (88 aa)). Positions 139–265 (KRTETMNWLF…RIVNRTNGPL (127 aa)) constitute a GST C-terminal domain. The disordered stretch occupies residues 260-288 (RTNGPLNEQLHERHDASDFETNTEDKRQG). The span at 268 to 288 (QLHERHDASDFETNTEDKRQG) shows a compositional bias: basic and acidic residues.

Belongs to the GST superfamily. Nu-class GSH transferase family. As to quaternary structure, homodimer.

In terms of biological role, exhibits a robust glutathione (GSH)-dependent disulfide-bond reductase activity toward the model substrate, 2-hydroxyethyl disulfide; the actual physiological substrates are not known. Also displays a modest GSH-dependent peroxidase activity toward several organic hydroperoxides, such as cumene hydroperoxide and linoleic acid 13(S)-hydroperoxide, but does not reduce H(2)O(2) or tert-butyl hydroperoxide at appreciable rates. Exhibits little or no GSH transferase activity with most typical electrophilic substrates, and has no detectable transferase activity toward 1-chloro-2,4-dinitrobenzene (CDNB) with glutathionylspermidine (GspSH) as the nucleophilic substrate. The chain is Disulfide-bond oxidoreductase YghU (yghU) from Escherichia coli (strain K12).